Consider the following 130-residue polypeptide: Small ribosomal subunit protein uS9 (130 aa).

This sequence belongs to the universal ribosomal protein uS9 family.

The polypeptide is Small ribosomal subunit protein uS9 (Cupriavidus pinatubonensis (strain JMP 134 / LMG 1197) (Cupriavidus necator (strain JMP 134))).